The primary structure comprises 1045 residues: 3-hydroxy-3-methylglutaryl-coenzyme A reductase 2 (1045 aa).

Topologically, residues 1-24 are cytoplasmic; sequence MSLPLKTIVHLVKPFACTARFSAR. The helical transmembrane segment at 25–45 threads the bilayer; sequence YPIHVIVVAVLLSAAAYLSVT. Topologically, residues 46 to 186 are lumenal; it reads QSYLNEWKLD…FSNKTSEFDQ (141 aa). N-linked (GlcNAc...) asparagine glycans are attached at residues Asn115, Asn150, Asn158, and Asn179. Residues 187–207 form a helical membrane-spanning segment; sequence FDLFIILAAYLTLFYTLCCLF. An SSD domain is found at 188-356; it reads DLFIILAAYL…ATFYSAILSM (169 aa). At 208 to 216 the chain is on the cytoplasmic side; that stretch reads NDMRKIGSK. A helical membrane pass occupies residues 217–237; that stretch reads FWLSFSALSNSACALYLSLYT. Residues 238-243 are Lumenal-facing; it reads THSLLK. The helical transmembrane segment at 244–264 threads the bilayer; the sequence is KPASLLSLVIGLPFIVVIIGF. Residues 265–301 lie on the Cytoplasmic side of the membrane; that stretch reads KHKVRLAAFSLQKFHRISIDKKITVSNIIYEAMFQEG. A helical membrane pass occupies residues 302-322; the sequence is AYLIRDYLFYISSFIGCAIYA. The Lumenal segment spans residues 323–324; it reads RH. Residues 325 to 345 form a helical membrane-spanning segment; sequence LPGLVNFCILSTFMLVFDLLL. Residues 346–402 lie on the Cytoplasmic side of the membrane; that stretch reads SATFYSAILSMKLEINIIHRSTVIRQTLEEDGVVPTTADIIYKDETASEPHFLRSNV. The chain crosses the membrane as a helical span at residues 403 to 423; it reads AIILGKASVIGLLLLINLYVF. Residues 424–497 are Lumenal-facing; that stretch reads TDKLNATILN…DSVSNAIRDQ (74 aa). N-linked (GlcNAc...) asparagine glycosylation is found at Asn428 and Asn455. Residues 498–518 form a helical membrane-spanning segment; that stretch reads FISKLLFFAFAVSISINVYLL. Residues 519 to 1045 lie on the Cytoplasmic side of the membrane; the sequence is NAAKIHTGYM…GPPCKTSALL (527 aa). Thr565 is modified (phosphothreonine). The active-site Charge relay system is the Glu710. Residue 716–722 coordinates CoA; sequence SAMRGCK. Residues 777 to 779 and 804 to 812 each bind NADP(+); these read SRF and DAMGMNMIS. The active-site Charge relay system is Lys844. 873–875 contributes to the CoA binding site; that stretch reads VLK. Asp920 serves as the catalytic Charge relay system. 1015–1016 is a binding site for CoA; sequence SH. The Proton donor role is filled by His1016. The tract at residues 1018-1045 is disordered; that stretch reads THNRKTNKANELPQPSNKGPPCKTSALL. NADP(+) is bound at residue 1020 to 1021; sequence NR.

Belongs to the HMG-CoA reductase family.

The protein resides in the endoplasmic reticulum membrane. Its subcellular location is the nucleus envelope. The catalysed reaction is (R)-mevalonate + 2 NADP(+) + CoA = (3S)-3-hydroxy-3-methylglutaryl-CoA + 2 NADPH + 2 H(+). It functions in the pathway metabolic intermediate biosynthesis; (R)-mevalonate biosynthesis; (R)-mevalonate from acetyl-CoA: step 3/3. Its function is as follows. HMG-CoA reductase; part of the first module of ergosterol biosynthesis pathway constitutes by the early steps of the pathway, conserved across all eukaryotes, and which results in the formation of mevalonate from acetyl-coenzyme A (acetyl-CoA). HMG1 and HMG2 catalyze the reduction of hydroxymethylglutaryl-CoA (HMG-CoA) to mevalonate that is the rate-limiting step within the first mosule. The first module starts with the action of the cytosolic acetyl-CoA acetyltransferase ERG10 that catalyzes the formation of acetoacetyl-CoA. The hydroxymethylglutaryl-CoA synthase ERG13 then condenses acetyl-CoA with acetoacetyl-CoA to form HMG-CoA. The rate-limiting step of the early module is the reduction to mevalonate by the 3-hydroxy-3-methylglutaryl-coenzyme A (HMG-CoA) reductases HMG1 and HMG2 which are derived from a single ancestral HMGR gene by gene duplication. This Saccharomyces cerevisiae (strain ATCC 204508 / S288c) (Baker's yeast) protein is 3-hydroxy-3-methylglutaryl-coenzyme A reductase 2.